The primary structure comprises 854 residues: Envelope glycoprotein B (854 aa).

The signal sequence occupies residues 1–30 (MSKNWFPLLCASVLVVYVSIASSSTGTASG). The Virion surface portion of the chain corresponds to 31–723 (AVTPTSPTEN…EGVVGFIKNP (693 aa)). N-linked (GlcNAc...) asparagine; by host glycans are attached at residues Asn-40, Asn-48, and Asn-60. 5 disulfide bridges follow: Cys-69-Cys-524, Cys-86-Cys-480, Cys-160-Cys-225, Cys-317-Cys-364, and Cys-546-Cys-583. An involved in fusion and/or binding to host membrane region spans residues 127 to 133 (SYSFIRE). Asn-183 carries N-linked (GlcNAc...) asparagine; by host glycosylation. Residues 212–219 (GSTWLYTT) form an involved in fusion and/or binding to host membrane region. Asn-256, Asn-275, Asn-314, Asn-356, Asn-378, Asn-382, Asn-390, Asn-423, Asn-426, Asn-442, Asn-558, and Asn-595 each carry an N-linked (GlcNAc...) asparagine; by host glycan. 2 hydrophobic membrane proximal region regions span residues 669 to 721 (VEGK…GFIK) and 700 to 720 (VAIGAVGGAVASFVEGVVGFI). The helical transmembrane segment at 724-744 (FGSFTVILFLLAVLGVIYLIY) threads the bilayer. Over 745-854 (MRQKRAYEKP…YQKIQNEYEV (110 aa)) the chain is Intravirion.

The protein belongs to the herpesviridae glycoprotein B family. In terms of assembly, homotrimer; disulfide-linked. Binds to heparan sulfate proteoglycans. Interacts with gH/gL heterodimer. Post-translationally, a proteolytic cleavage by host furin generates two subunits that remain linked by disulfide bonds.

The protein resides in the virion membrane. It localises to the host cell membrane. The protein localises to the host endosome membrane. Its subcellular location is the host Golgi apparatus membrane. Its function is as follows. Envelope glycoprotein that forms spikes at the surface of virion envelope. Essential for the initial attachment to heparan sulfate moieties of the host cell surface proteoglycans. Involved in fusion of viral and cellular membranes leading to virus entry into the host cell. Following initial binding to its host receptors, membrane fusion is mediated by the fusion machinery composed at least of gB and the heterodimer gH/gL. May be involved in the fusion between the virion envelope and the outer nuclear membrane during virion egress. In Macaca mulatta (Rhesus macaque), this protein is Envelope glycoprotein B.